Reading from the N-terminus, the 548-residue chain is Probable malate:quinone oxidoreductase (548 aa).

The segment at 522–548 (KPQAADSTPKAQLKPQPARKEVADIAL) is disordered. The segment covering 539–548 (ARKEVADIAL) has biased composition (basic and acidic residues).

Belongs to the MQO family. Requires FAD as cofactor.

It carries out the reaction (S)-malate + a quinone = a quinol + oxaloacetate. It functions in the pathway carbohydrate metabolism; tricarboxylic acid cycle; oxaloacetate from (S)-malate (quinone route): step 1/1. The chain is Probable malate:quinone oxidoreductase from Escherichia fergusonii (strain ATCC 35469 / DSM 13698 / CCUG 18766 / IAM 14443 / JCM 21226 / LMG 7866 / NBRC 102419 / NCTC 12128 / CDC 0568-73).